Reading from the N-terminus, the 268-residue chain is Cell division coordinator CpoB (268 aa).

The first 21 residues, 1-21 (MRMCRRVVTVLALSLPLAAWA), serve as a signal peptide directing secretion. Residues 58-94 (QLFMQLQQMQDQLSRQQGIIEELQNDVSRMKQENLER) adopt a coiled-coil conformation. The tract at residues 104 to 146 (SGAAPAATPDNSSGGGASNAAPDAAAGAAAQQPAGSSQPGDPA) is disordered. A compositionally biased stretch (low complexity) spans 121–143 (SNAAPDAAAGAAAQQPAGSSQPG). 3 TPR repeats span residues 149–181 (KLYY…YPNS), 185–218 (GNAQ…YPKH), and 222–255 (PDSL…YPGT).

The protein belongs to the CpoB family.

It localises to the periplasm. Mediates coordination of peptidoglycan synthesis and outer membrane constriction during cell division. The protein is Cell division coordinator CpoB of Pseudomonas putida (strain ATCC 47054 / DSM 6125 / CFBP 8728 / NCIMB 11950 / KT2440).